A 408-amino-acid chain; its full sequence is Putative mannan endo-1,4-beta-mannosidase P (408 aa).

The N-terminal stretch at 1–23 is a signal peptide; it reads MKCLCFIVLLAIVIAQSYVGVEA. An N-linked (GlcNAc...) asparagine glycan is attached at N73. Substrate is bound by residues W85 and N201. The Proton donor role is filled by E202. E322 acts as the Nucleophile in catalysis. Substrate is bound at residue W364.

The protein belongs to the glycosyl hydrolase 5 (cellulase A) family.

The protein localises to the secreted. The enzyme catalyses Random hydrolysis of (1-&gt;4)-beta-D-mannosidic linkages in mannans, galactomannans and glucomannans.. The protein is Putative mannan endo-1,4-beta-mannosidase P (MANP) of Arabidopsis thaliana (Mouse-ear cress).